Consider the following 122-residue polypeptide: Large ribosomal subunit protein uL14 (122 aa).

The protein belongs to the universal ribosomal protein uL14 family. Part of the 50S ribosomal subunit. Forms a cluster with proteins L3 and L19. In the 70S ribosome, L14 and L19 interact and together make contacts with the 16S rRNA in bridges B5 and B8.

In terms of biological role, binds to 23S rRNA. Forms part of two intersubunit bridges in the 70S ribosome. This is Large ribosomal subunit protein uL14 from Paraburkholderia phymatum (strain DSM 17167 / CIP 108236 / LMG 21445 / STM815) (Burkholderia phymatum).